We begin with the raw amino-acid sequence, 224 residues long: Prophage repressor CohE (224 aa).

This chain is Prophage repressor CohE (cohE), found in Escherichia coli (strain K12).